Here is a 176-residue protein sequence, read N- to C-terminus: Shikimate kinase (176 aa).

14-19 contributes to the ATP binding site; the sequence is GAGKSS. S18 is a Mg(2+) binding site. Substrate contacts are provided by D36, R60, and G82. Residue R120 participates in ATP binding. R138 lines the substrate pocket.

The protein belongs to the shikimate kinase family. In terms of assembly, monomer. Mg(2+) is required as a cofactor.

The protein resides in the cytoplasm. The catalysed reaction is shikimate + ATP = 3-phosphoshikimate + ADP + H(+). It functions in the pathway metabolic intermediate biosynthesis; chorismate biosynthesis; chorismate from D-erythrose 4-phosphate and phosphoenolpyruvate: step 5/7. Functionally, catalyzes the specific phosphorylation of the 3-hydroxyl group of shikimic acid using ATP as a cosubstrate. The chain is Shikimate kinase from Dehalococcoides mccartyi (strain ATCC BAA-2266 / KCTC 15142 / 195) (Dehalococcoides ethenogenes (strain 195)).